We begin with the raw amino-acid sequence, 297 residues long: Trimeric intracellular cation channel type A (297 aa).

At 1 to 18 the chain is on the lumenal side; that stretch reads MDLISSLSLGELALSFSR. Residues 19–39 form a helical membrane-spanning segment; that stretch reads VPLFPVFDLSYFIVSIIYLKY. Over 40-51 the chain is Cytoplasmic; sequence EPGSVELSRRHP. Residues 52–72 traverse the membrane as a helical segment; the sequence is VASWLCAMLHCFGSYILADLL. Over 73–85 the chain is Lumenal; it reads LGEPIIDYFSNSS. Gly74 contributes to the Ca(2+) binding site. A helical membrane pass occupies residues 86–106; it reads SILLASGVWYLIFFCPLDLFY. Over 107 to 143 the chain is Cytoplasmic; that stretch reads KCVCFLPVKLIFVAMKEVVRVRKIAVGIHHAHHYHHG. Positions 122 and 126 each coordinate a 1,2-diacyl-sn-glycero-3-phospho-(1D-myo-inositol-4,5-bisphosphate). The helical transmembrane segment at 144 to 164 threads the bilayer; sequence WFIMIATGWVKGSGVALLSNL. Topologically, residues 165-177 are lumenal; it reads EQLLRGVWKPETN. Residues 178-198 form a helical membrane-spanning segment; the sequence is EILHMSFPTKASLYGAILFTL. Residues 199 to 208 lie on the Cytoplasmic side of the membrane; the sequence is QQTRWLPVSK. A helical membrane pass occupies residues 209–229; it reads ASLIFVFTMFMVSCKVFLTAT. The Lumenal portion of the chain corresponds to 230–233; it reads HSHS. A helical membrane pass occupies residues 234-254; sequence SPFDVLEGYICPVLFGATWGG. Topologically, residues 255-297 are cytoplasmic; the sequence is DHHHDNHGAPHGMGLGTQHSGLPAKAKEELSEGFRKKKTKKAD. Residues 259-297 form a disordered region; the sequence is DNHGAPHGMGLGTQHSGLPAKAKEELSEGFRKKKTKKAD. Positions 279 to 288 are enriched in basic and acidic residues; the sequence is KAKEELSEGF.

The protein belongs to the TMEM38 family. As to quaternary structure, homotrimer; conformation seems to be controled by binding to diacylglycerol (DAG).

The protein resides in the sarcoplasmic reticulum membrane. It is found in the nucleus membrane. It carries out the reaction K(+)(in) = K(+)(out). With respect to regulation, channel activity is activated by a change of voltage within the sarcoplasmic reticulum lumen and blocked by luminal high Ca(2+) levels. Its function is as follows. Intracellular monovalent cation channel required for maintenance of rapid intracellular calcium release. Acts as a potassium counter-ion channel that functions in synchronization with calcium release from intracellular stores. Opened by a change of voltage within the sarcoplasmic reticulum lumen. The sequence is that of Trimeric intracellular cation channel type A from Rattus norvegicus (Rat).